Reading from the N-terminus, the 469-residue chain is NADH-quinone oxidoreductase subunit N (469 aa).

Transmembrane regions (helical) follow at residues 6–26, 37–57, 61–81, 96–116, 121–141, 156–176, 197–217, 234–254, 263–283, 291–311, 315–335, 362–382, 397–419, and 441–461; these read IWIIMPLAILAGASLLILLLG, VGVAACVGAALWALQLQPAAL, LGVAFTPFARFFTVLFSLTAA, ISGEEYPATVIFAAFGMAVVS, LLILFLGLEALTFAFYILVAI, LLLGAISAACIAFGIALLYAA, PIALAGWGLLLIGIAFKISLV, VVAFLSTASKGAAIAFLLLLL, LHTPLWWLSLLSMLVGNLAAL, MLAYSSIAQMGYLVLALLTGS, FAAVILYVVVYTAMNLAAFGA, AGILALALFALAGIPPTAGFI, IPLAIVGILAAAVSAYYYLRVVV, and IALSAAALVILAVGIYPSPLL.

The protein belongs to the complex I subunit 2 family. NDH-1 is composed of 14 different subunits. Subunits NuoA, H, J, K, L, M, N constitute the membrane sector of the complex.

It localises to the cell inner membrane. It catalyses the reaction a quinone + NADH + 5 H(+)(in) = a quinol + NAD(+) + 4 H(+)(out). NDH-1 shuttles electrons from NADH, via FMN and iron-sulfur (Fe-S) centers, to quinones in the respiratory chain. The immediate electron acceptor for the enzyme in this species is believed to be ubiquinone. Couples the redox reaction to proton translocation (for every two electrons transferred, four hydrogen ions are translocated across the cytoplasmic membrane), and thus conserves the redox energy in a proton gradient. This chain is NADH-quinone oxidoreductase subunit N, found in Geotalea uraniireducens (strain Rf4) (Geobacter uraniireducens).